The primary structure comprises 189 residues: Potassium-transporting ATPase KdpC subunit (189 aa).

A helical transmembrane segment spans residues 6-26 (PAILFFIVFTILCGGVYPAVV).

It belongs to the KdpC family. As to quaternary structure, the system is composed of three essential subunits: KdpA, KdpB and KdpC.

It localises to the cell inner membrane. Part of the high-affinity ATP-driven potassium transport (or Kdp) system, which catalyzes the hydrolysis of ATP coupled with the electrogenic transport of potassium into the cytoplasm. This subunit acts as a catalytic chaperone that increases the ATP-binding affinity of the ATP-hydrolyzing subunit KdpB by the formation of a transient KdpB/KdpC/ATP ternary complex. The chain is Potassium-transporting ATPase KdpC subunit from Geotalea uraniireducens (strain Rf4) (Geobacter uraniireducens).